A 300-amino-acid chain; its full sequence is MTAEPSSAPPEQPILRRIALSLQYEGSDFCGWQRQNNARSVQAVLETAIAQLDPLRPIQSFAAGRTDAGVHAAAQVVHFDCSGPIPAAKWAPALNGRLPASIRVRESVERPRDWHACYSAVYRRYRYIIHNGRRPNLFLTPWTWHRYHHRLNEENMRVALEGMIGLHDFAAFMRAGSRRPHSRTTIQDVLVEREGDLIRVEIQASGFLYGMVRLLMAQLVAVGEHRLSVKAFEQRWRDRRRDQVREAAPARGLCLLRAGYAEPIFSEAGWYDCQPWFSLATDDPPPDPPCFAKDEQQELQ.

The active-site Nucleophile is aspartate 67. Position 125 (tyrosine 125) interacts with substrate.

Belongs to the tRNA pseudouridine synthase TruA family. As to quaternary structure, homodimer.

The enzyme catalyses uridine(38/39/40) in tRNA = pseudouridine(38/39/40) in tRNA. Functionally, formation of pseudouridine at positions 38, 39 and 40 in the anticodon stem and loop of transfer RNAs. This chain is tRNA pseudouridine synthase A, found in Synechococcus sp. (strain CC9902).